A 60-amino-acid polypeptide reads, in one-letter code: Waprin-Lio1 (60 aa).

A signal peptide spans 1–8 (MLLGTTSA). The WAP domain maps to 9-59 (QVVRPGSCPNVDVPIPPLGLCRTTCQTDANCQEGRKCCKNGCGFMTCETAR). 4 disulfide bridges follow: Cys-16–Cys-46, Cys-29–Cys-50, Cys-33–Cys-45, and Cys-39–Cys-55.

It belongs to the venom waprin family. Expressed by the venom gland.

The protein localises to the secreted. Functionally, damages membranes of susceptible bacteria. Has no hemolytic activity. Not toxic to mice. Does not inhibit the proteinases elastase and cathepsin G. The polypeptide is Waprin-Lio1 (Erythrolamprus poecilogyrus (Water snake)).